A 536-amino-acid polypeptide reads, in one-letter code: Phosphoenolpyruvate carboxykinase (ATP) (536 aa).

The substrate site is built by R61, Y195, and K201. ATP-binding positions include K201, H220, and 236–244 (GLSGTGKTT). 2 residues coordinate Mn(2+): K201 and H220. D257 is a binding site for Mn(2+). ATP contacts are provided by E285, R322, and T447. R322 provides a ligand contact to substrate.

Belongs to the phosphoenolpyruvate carboxykinase (ATP) family. Mn(2+) serves as cofactor.

It is found in the cytoplasm. The catalysed reaction is oxaloacetate + ATP = phosphoenolpyruvate + ADP + CO2. The protein operates within carbohydrate biosynthesis; gluconeogenesis. Its function is as follows. Involved in the gluconeogenesis. Catalyzes the conversion of oxaloacetate (OAA) to phosphoenolpyruvate (PEP) through direct phosphoryl transfer between the nucleoside triphosphate and OAA. The polypeptide is Phosphoenolpyruvate carboxykinase (ATP) (Rhizobium etli (strain CIAT 652)).